The sequence spans 79 residues: Cell division protein ZapB (79 aa).

Residues 4–78 (EVFEKLEAKV…LRALLGKMEE (75 aa)) are a coiled coil.

Belongs to the ZapB family. Homodimer. The ends of the coiled-coil dimer bind to each other, forming polymers. Interacts with FtsZ.

The protein resides in the cytoplasm. Its function is as follows. Non-essential, abundant cell division factor that is required for proper Z-ring formation. It is recruited early to the divisome by direct interaction with FtsZ, stimulating Z-ring assembly and thereby promoting cell division earlier in the cell cycle. Its recruitment to the Z-ring requires functional FtsA or ZipA. This chain is Cell division protein ZapB, found in Pectobacterium carotovorum subsp. carotovorum (strain PC1).